The chain runs to 281 residues: NADPH-dependent 7-cyano-7-deazaguanine reductase (281 aa).

Position 89-91 (89-91 (VES)) interacts with substrate. 91-92 (SK) serves as a coordination point for NADPH. The active-site Thioimide intermediate is the Cys-188. The active-site Proton donor is the Asp-195. Residue 227-228 (HE) participates in substrate binding. Position 256–257 (256–257 (RG)) interacts with NADPH.

This sequence belongs to the GTP cyclohydrolase I family. QueF type 2 subfamily. As to quaternary structure, homodimer.

The protein resides in the cytoplasm. The enzyme catalyses 7-aminomethyl-7-carbaguanine + 2 NADP(+) = 7-cyano-7-deazaguanine + 2 NADPH + 3 H(+). It participates in tRNA modification; tRNA-queuosine biosynthesis. Functionally, catalyzes the NADPH-dependent reduction of 7-cyano-7-deazaguanine (preQ0) to 7-aminomethyl-7-deazaguanine (preQ1). The chain is NADPH-dependent 7-cyano-7-deazaguanine reductase from Azoarcus sp. (strain BH72).